Reading from the N-terminus, the 539-residue chain is CTP synthase (539 aa).

An amidoligase domain region spans residues 1–267; sequence MTKYIFVTGG…DQKVVDFLHI (267 aa). Serine 13 provides a ligand contact to CTP. Serine 13 serves as a coordination point for UTP. Residue 14 to 19 participates in ATP binding; the sequence is SLGKGI. Tyrosine 54 contributes to the L-glutamine binding site. Aspartate 71 is an ATP binding site. Mg(2+) is bound by residues aspartate 71 and glutamate 141. CTP contacts are provided by residues 148 to 150, 188 to 193, and lysine 224; these read DME and KSKPTQ. UTP-binding positions include 188 to 193 and lysine 224; that span reads KSKPTQ. Positions 294 to 537 constitute a Glutamine amidotransferase type-1 domain; sequence KITLVGKYVE…IGAASGLQVD (244 aa). Residue glycine 356 participates in L-glutamine binding. Catalysis depends on cysteine 383, which acts as the Nucleophile; for glutamine hydrolysis. L-glutamine is bound by residues 384 to 387, glutamate 407, and arginine 465; that span reads LGMQ. Active-site residues include histidine 510 and glutamate 512.

It belongs to the CTP synthase family. As to quaternary structure, homotetramer.

The enzyme catalyses UTP + L-glutamine + ATP + H2O = CTP + L-glutamate + ADP + phosphate + 2 H(+). The catalysed reaction is L-glutamine + H2O = L-glutamate + NH4(+). It carries out the reaction UTP + NH4(+) + ATP = CTP + ADP + phosphate + 2 H(+). The protein operates within pyrimidine metabolism; CTP biosynthesis via de novo pathway; CTP from UDP: step 2/2. With respect to regulation, allosterically activated by GTP, when glutamine is the substrate; GTP has no effect on the reaction when ammonia is the substrate. The allosteric effector GTP functions by stabilizing the protein conformation that binds the tetrahedral intermediate(s) formed during glutamine hydrolysis. Inhibited by the product CTP, via allosteric rather than competitive inhibition. Catalyzes the ATP-dependent amination of UTP to CTP with either L-glutamine or ammonia as the source of nitrogen. Regulates intracellular CTP levels through interactions with the four ribonucleotide triphosphates. The sequence is that of CTP synthase from Lactobacillus delbrueckii subsp. bulgaricus (strain ATCC 11842 / DSM 20081 / BCRC 10696 / JCM 1002 / NBRC 13953 / NCIMB 11778 / NCTC 12712 / WDCM 00102 / Lb 14).